We begin with the raw amino-acid sequence, 588 residues long: MRSTAYLTALLSFLGATHAAPEGPRCRCTPDQSCWPSPGLWQTLNKTLSGNLVAVKPVGTVCHDPTYNGGLCDSVKGMQTDSSWRSAQPGAVQSINWETWPEKNESCYIDGPRQVPCGQGRIPLYSAVVQSPLDIQKTVRFASKYNLRLVIKNTGHDFLGRSTGPQSLQILTHNMKSINFTDNFVPEGKPDGRGIGQAVTIGAGVQLNELYEAAGKRGLTQVIGLSTTVGAAGGYIQGGGHSPLGPWKGMSTDHVLEYKVVTAGAKFVTANEYQNSDLFWALRGGGGGTFGVVTSVTLRTFKDPPTIVSQVNVTMDGKANESYWAAVEKFQAYLPTLSDGGCSGYYYMLPNVTLGPQSAAVIIAAFYYANKTDKAHVDNLYRPLFASLSSIPGINVASVSVPVSSSTEAFRSAFDQKPPRDGGGVNILGSRLFSRKLLEAPGGAANLTAALSKLDFKNLQPAIGHLVAGGQVAKNTHIQSALNPSWRKALVHLVISRDWSIDSTFAEQEKISTKLTAEEIPLLAAVEPDMGAYTNEADVNEPRFQQTFWGTNYNTLLRVKNRWDPRGLFFVRSGVGSEAWDKQGLCRA.

An N-terminal signal peptide occupies residues 1-19 (MRSTAYLTALLSFLGATHA). Residues Asn45 and Asn104 are each glycosylated (N-linked (GlcNAc...) asparagine). The FAD-binding PCMH-type domain occupies 118–303 (GQGRIPLYSA…TSVTLRTFKD (186 aa)). Residue His156 is modified to Pros-8alpha-FAD histidine. N-linked (GlcNAc...) asparagine glycosylation is found at Asn179, Asn312, Asn320, Asn351, Asn370, and Asn446.

It belongs to the oxygen-dependent FAD-linked oxidoreductase family. The cofactor is FAD.

Its subcellular location is the secreted. This is an uncharacterized protein from Arthroderma benhamiae (strain ATCC MYA-4681 / CBS 112371) (Trichophyton mentagrophytes).